A 326-amino-acid chain; its full sequence is ATP synthase gamma chain (326 aa).

This sequence belongs to the ATPase gamma chain family. F-type ATPases have 2 components, CF(1) - the catalytic core - and CF(0) - the membrane proton channel. CF(1) has five subunits: alpha(3), beta(3), gamma(1), delta(1), epsilon(1). CF(0) has three main subunits: a, b and c.

The protein resides in the cell membrane. Produces ATP from ADP in the presence of a proton gradient across the membrane. The gamma chain is believed to be important in regulating ATPase activity and the flow of protons through the CF(0) complex. This chain is ATP synthase gamma chain, found in Corynebacterium jeikeium (strain K411).